The chain runs to 370 residues: MTTCRLFAGFCQAVTMSKYSQYFNKTLIQVHYLTAKEMTAEELRDRIESKQSLSSLNILFVVICSIIILENLLVLIAVFRNKKFHSAMFFFIGNLAFSDLLAGSAYIANIFLSGPRTFHLTPVQWFIREGTAFIALSASVFSLLAIAIERYIAITKVKVYGSNKTCRMFLLIGACWVMSILLGGLPIIGWNCINNLDDCSAVLPLNTRYYIRFVVTIFSIILLSIVILYVRIYLIVRTSHQEATNSPAYALLKTVTIVLGVFIICWLPAFTILLLDTSCKMKQCPILNNAGIFFSFATLNSALNPLIYTLRSKDMRKEFLRVLCCWGLLNCGRPPHRCMVPLKSSSSMEHCTNKHEHQSIPIMQDCTTCV.

The Extracellular segment spans residues 1–57 (MTTCRLFAGFCQAVTMSKYSQYFNKTLIQVHYLTAKEMTAEELRDRIESKQSLSSLN). A glycan (N-linked (GlcNAc...) asparagine) is linked at asparagine 24. The helical transmembrane segment at 58–78 (ILFVVICSIIILENLLVLIAV) threads the bilayer. The Cytoplasmic segment spans residues 79 to 87 (FRNKKFHSA). A helical membrane pass occupies residues 88–108 (MFFFIGNLAFSDLLAGSAYIA). At 109–128 (NIFLSGPRTFHLTPVQWFIR) the chain is on the extracellular side. The helical transmembrane segment at 129 to 149 (EGTAFIALSASVFSLLAIAIE) threads the bilayer. Over 150 to 167 (RYIAITKVKVYGSNKTCR) the chain is Cytoplasmic. Residues 168–193 (MFLLIGACWVMSILLGGLPIIGWNCI) traverse the membrane as a helical segment. The Extracellular portion of the chain corresponds to 194 to 219 (NNLDDCSAVLPLNTRYYIRFVVTIFS). Residues 220 to 230 (IILLSIVILYV) form a helical membrane-spanning segment. Residues 231–254 (RIYLIVRTSHQEATNSPAYALLKT) are Cytoplasmic-facing. The chain crosses the membrane as a helical span at residues 255 to 275 (VTIVLGVFIICWLPAFTILLL). Topologically, residues 276–289 (DTSCKMKQCPILNN) are extracellular. A helical membrane pass occupies residues 290-310 (AGIFFSFATLNSALNPLIYTL). At 311–370 (RSKDMRKEFLRVLCCWGLLNCGRPPHRCMVPLKSSSSMEHCTNKHEHQSIPIMQDCTTCV) the chain is on the cytoplasmic side. Residue cysteine 325 is the site of S-palmitoyl cysteine attachment.

The protein belongs to the G-protein coupled receptor 1 family.

The protein resides in the cell membrane. In terms of biological role, receptor for the lysosphingolipid sphingosine 1-phosphate (S1P). S1P receptor is critical for cell migration and epithelial integrity during vertebrate embryogenesis. Receptor for the chemokine-like protein FAM19A5. Mediates the inhibitory effect of FAM19A5 on vascular smooth muscle cell proliferation and migration. This chain is Sphingosine 1-phosphate receptor 2 (s1pr2), found in Danio rerio (Zebrafish).